A 65-amino-acid chain; its full sequence is U15-hexatoxin-Mg1a (65 aa).

Contains 4 disulfide bonds. As to expression, expressed by the venom gland.

The protein localises to the secreted. Its function is as follows. Intrathorax injection into crickets causes paralysis prolonged for more than 60 minutes, followed by recovery. This chain is U15-hexatoxin-Mg1a, found in Macrothele gigas (Japanese funnel web spider).